Consider the following 298-residue polypeptide: tRNA pseudouridine synthase B (298 aa).

Catalysis depends on aspartate 45, which acts as the Nucleophile.

Belongs to the pseudouridine synthase TruB family. Type 1 subfamily.

The catalysed reaction is uridine(55) in tRNA = pseudouridine(55) in tRNA. Responsible for synthesis of pseudouridine from uracil-55 in the psi GC loop of transfer RNAs. The protein is tRNA pseudouridine synthase B of Thiobacillus denitrificans (strain ATCC 25259 / T1).